The chain runs to 438 residues: Thymidine phosphorylase (438 aa).

The protein belongs to the thymidine/pyrimidine-nucleoside phosphorylase family. Homodimer.

The catalysed reaction is thymidine + phosphate = 2-deoxy-alpha-D-ribose 1-phosphate + thymine. It participates in pyrimidine metabolism; dTMP biosynthesis via salvage pathway; dTMP from thymine: step 1/2. In terms of biological role, the enzymes which catalyze the reversible phosphorolysis of pyrimidine nucleosides are involved in the degradation of these compounds and in their utilization as carbon and energy sources, or in the rescue of pyrimidine bases for nucleotide synthesis. This chain is Thymidine phosphorylase, found in Sinorhizobium fredii (strain NBRC 101917 / NGR234).